The chain runs to 478 residues: Sporozoite surface protein P36p (478 aa).

The N-terminal stretch at 1–41 is a signal peptide; that stretch reads MYVLVLIHMCYHFTMKRKKLFVYFIFLSFIINFNFNININF. 6-Cys domains lie at 42–178 and 181–326; these read VCSN…IKKT and KIKG…FDNN. Intrachain disulfides connect Cys-59–Cys-71, Cys-85–Cys-159, Cys-102–Cys-157, Cys-185–Cys-209, Cys-223–Cys-302, and Cys-243–Cys-300. N-linked (GlcNAc...) asparagine glycans are attached at residues Asn-109 and Asn-138. 3 N-linked (GlcNAc...) asparagine glycosylation sites follow: Asn-229, Asn-279, and Asn-291. Ser-455 carries GPI-anchor amidated serine lipidation. A propeptide spans 456–478 (removed in mature form); it reads SSKYILFNNFLILFIFLIYIYST.

The protein resides in the cell surface. It is found in the cell membrane. In terms of biological role, involved in sporozoite infection of hepatocytes and replication therein. The protein is Sporozoite surface protein P36p (PF52) of Plasmodium falciparum (isolate 3D7).